We begin with the raw amino-acid sequence, 689 residues long: Glycine--tRNA ligase beta subunit (689 aa).

This sequence belongs to the class-II aminoacyl-tRNA synthetase family. In terms of assembly, tetramer of two alpha and two beta subunits.

The protein resides in the cytoplasm. It catalyses the reaction tRNA(Gly) + glycine + ATP = glycyl-tRNA(Gly) + AMP + diphosphate. This is Glycine--tRNA ligase beta subunit from Citrobacter koseri (strain ATCC BAA-895 / CDC 4225-83 / SGSC4696).